The chain runs to 176 residues: 2-C-methyl-D-erythritol 2,4-cyclodiphosphate synthase (176 aa).

A divalent metal cation is bound by residues Asp23, His25, and His60. Asp23–His25 is a binding site for 4-CDP-2-C-methyl-D-erythritol 2-phosphate. Thr149–Glu152 contacts 4-CDP-2-C-methyl-D-erythritol 2-phosphate.

The protein belongs to the IspF family. Homotrimer. It depends on a divalent metal cation as a cofactor.

The enzyme catalyses 4-CDP-2-C-methyl-D-erythritol 2-phosphate = 2-C-methyl-D-erythritol 2,4-cyclic diphosphate + CMP. Its pathway is isoprenoid biosynthesis; isopentenyl diphosphate biosynthesis via DXP pathway; isopentenyl diphosphate from 1-deoxy-D-xylulose 5-phosphate: step 4/6. Its function is as follows. Involved in the biosynthesis of isopentenyl diphosphate (IPP) and dimethylallyl diphosphate (DMAPP), two major building blocks of isoprenoid compounds. Catalyzes the conversion of 4-diphosphocytidyl-2-C-methyl-D-erythritol 2-phosphate (CDP-ME2P) to 2-C-methyl-D-erythritol 2,4-cyclodiphosphate (ME-CPP) with a corresponding release of cytidine 5-monophosphate (CMP). The polypeptide is 2-C-methyl-D-erythritol 2,4-cyclodiphosphate synthase (Chlamydia abortus (strain DSM 27085 / S26/3) (Chlamydophila abortus)).